A 691-amino-acid polypeptide reads, in one-letter code: Guanylate cyclase soluble subunit alpha-1 (691 aa).

Serine 267 is subject to Phosphoserine. The region spanning 480–607 (VTMLFSDIVG…GNNVTLANKF (128 aa)) is the Guanylate cyclase domain.

It belongs to the adenylyl cyclase class-4/guanylyl cyclase family. In terms of assembly, the active enzyme is formed by a heterodimer of an alpha and a beta subunit. Heterodimer with GUCY1B1. It depends on Mg(2+) as a cofactor. Mn(2+) serves as cofactor.

The protein localises to the cytoplasm. It carries out the reaction GTP = 3',5'-cyclic GMP + diphosphate. Its activity is regulated as follows. Activated by nitric oxide in the presence of magnesium or manganese ions. The polypeptide is Guanylate cyclase soluble subunit alpha-1 (Gucy1a1) (Mus musculus (Mouse)).